A 442-amino-acid chain; its full sequence is Cell adhesion molecule 1 (442 aa).

An N-terminal signal peptide occupies residues 1–44 (MASVVLPSGSQCAAAAAAAAPPGLRLRLLLLLFSAAALIPTGDG). In terms of domain architecture, Ig-like V-type spans 45-139 (QNLFTKDVTV…PPQESYTTIT (95 aa)). Residues 45 to 374 (QNLFTKDVTV…EEGSIRAVDH (330 aa)) are Extracellular-facing. A disulfide bond links C64 and C124. N-linked (GlcNAc...) asparagine glycosylation is found at N67, N101, N113, and N165. 2 Ig-like C2-type domains span residues 144–238 (PRNL…RYLE) and 243–329 (PQVH…YMLY). Disulfide bonds link C166–C220 and C267–C313. N-linked (GlcNAc...) asparagine glycosylation is found at N304 and N308. The chain crosses the membrane as a helical span at residues 375–395 (AVIGGVVAVVVFAMLCLLIIL). Over 396–442 (GRYFARHKGTYFTHEAKGADDAADADTAIINAEGGQNNSEEKKEYFI) the chain is Cytoplasmic. At T422 the chain carries Phosphothreonine. S434 is subject to Phosphoserine.

It belongs to the nectin family. In terms of assembly, homodimer (via Ig-like V-type domain). Interacts with FARP1. Interacts (via Ig-like V-type domain) with CRTAM (via Ig-like V-type domain); the interaction competes with CRTAM homodimerization and CADM1 homodimerization. Interacts (via C-terminus) with EPB41L3/DAL1. The interaction with EPB41L3/DAL1 may act to anchor CADM1 to the actin cytoskeleton. Interacts (via C-terminus) with MPP2 (via PDZ domain). Interacts (via C-terminus) with MPP3 (via PDZ domain); this interaction connects CADM1 with DLG1. Interacts (via C-terminus) with PALS2 (via PDZ domain). (Microbial infection) Interacts with herpes virus 8 proteins vFLIP and vGPCR; these interactions are essential for NF-kappa-B activation. Glycosylation at Asn-67 and Asn-101 promotes adhesive binding and synapse induction.

Its subcellular location is the cell membrane. It localises to the synapse. Functionally, mediates homophilic cell-cell adhesion in a Ca(2+)-independent manner. Also mediates heterophilic cell-cell adhesion with CADM3 and NECTIN3 in a Ca(2+)-independent manner. Interaction with CRTAM promotes natural killer (NK) cell cytotoxicity and interferon-gamma (IFN-gamma) secretion by CD8+ cells in vitro as well as NK cell-mediated rejection of tumors expressing CADM1 in vivo. In mast cells, may mediate attachment to and promote communication with nerves. CADM1, together with MITF, is essential for development and survival of mast cells in vivo. By interacting with CRTAM and thus promoting the adhesion between CD8+ T-cells and CD8+ dendritic cells, regulates the retention of activated CD8+ T-cell within the draining lymph node. Required for the intestinal retention of intraepithelial CD4+ CD8+ T-cells and, to a lesser extent, intraepithelial and lamina propria CD8+ T-cells and CD4+ T-cells. Interaction with CRTAM promotes the adhesion to gut-associated CD103+ dendritic cells, which may facilitate the expression of gut-homing and adhesion molecules on T-cells and the conversion of CD4+ T-cells into CD4+ CD8+ T-cells. Acts as a synaptic cell adhesion molecule and plays a role in the formation of dendritic spines and in synapse assembly. May be involved in neuronal migration, axon growth, pathfinding, and fasciculation on the axons of differentiating neurons. May play diverse roles in the spermatogenesis including in the adhesion of spermatocytes and spermatids to Sertoli cells and for their normal differentiation into mature spermatozoa. Acts as a tumor suppressor in non-small-cell lung cancer (NSCLC) cells. May contribute to the less invasive phenotypes of lepidic growth tumor cells. In terms of biological role, (Microbial infection) Induces cell fusion in neuron infected by a neuropathogenic strain of measles. Interacts with measles hemagglutinin to trigger hyperfusogenic F-mediated membrane fusion and presumably transsynaptic cell-to-cell transmission of the virus. This is Cell adhesion molecule 1 from Homo sapiens (Human).